A 224-amino-acid polypeptide reads, in one-letter code: PKHD-type hydroxylase Sbal_3634 (224 aa).

Positions 78-176 (QFYPPLFNRY…RTAAFMWLQS (99 aa)) constitute a Fe2OG dioxygenase domain. 3 residues coordinate Fe cation: His-96, Asp-98, and His-157. Residue Arg-167 participates in 2-oxoglutarate binding.

It depends on Fe(2+) as a cofactor. L-ascorbate is required as a cofactor.

This is PKHD-type hydroxylase Sbal_3634 from Shewanella baltica (strain OS155 / ATCC BAA-1091).